Reading from the N-terminus, the 1011-residue chain is PE-PGRS family protein PE_PGRS30 (1011 aa).

The PE domain maps to 1-93; it reads MSFLLVEPDL…AAAYTGAEAA (93 aa). Residues 130-696 are PGRS domain; the sequence is SNAGGNGGPG…GGTGGTGGVL (567 aa). The segment covering 595–696 has biased composition (gly residues); that stretch reads GGAGGTGGDH…GGTGGTGGVL (102 aa). Residues 595–701 are disordered; it reads GGAGGTGGDH…TGGVLFGQSG (107 aa). Positions 697 to 1011 are C-terminal domain; it reads FGQSGSSGPP…PTQLAQAIAP (315 aa).

This sequence belongs to the mycobacterial PE family. PGRS subfamily.

Its subcellular location is the secreted. It localises to the cell wall. It is found in the cell surface. Mediates suppression of pro-inflammatory immune response in macrophages via modulation of host cytokine response. Required for full virulence. Involved in inhibition of phago-lysosome fusion. The polypeptide is PE-PGRS family protein PE_PGRS30 (Mycobacterium tuberculosis (strain ATCC 25618 / H37Rv)).